The chain runs to 444 residues: E3 ubiquitin-protein ligase APD2 (444 aa).

A compositionally biased stretch (low complexity) spans 1–15 (MSLPDSLPSSSSSPP). The segment at 1 to 41 (MSLPDSLPSSSSSPPVTREETGFHRFEHHGNDSGFDHRDRP) is disordered. Basic and acidic residues predominate over residues 17–41 (TREETGFHRFEHHGNDSGFDHRDRP). A run of 2 helical transmembrane segments spans residues 74–94 (VVVV…GLYG) and 312–332 (IAYI…SSLF). Residues 393–432 (CAICYDAPRDCFFLSCGHCVACFQCGTRIAETSGFCPVCR) form an RING-type zinc finger.

As to quaternary structure, interacts with At1g78040, At1g10650, VHA-c4/AVAP4, VHA-c''2/VMA16 and TUFA. As to expression, expressed in the shoot apical meristems (SAM), root tips, pollen and inflorescences.

The protein localises to the endomembrane system. The catalysed reaction is S-ubiquitinyl-[E2 ubiquitin-conjugating enzyme]-L-cysteine + [acceptor protein]-L-lysine = [E2 ubiquitin-conjugating enzyme]-L-cysteine + N(6)-ubiquitinyl-[acceptor protein]-L-lysine.. It participates in protein modification; protein ubiquitination. Its function is as follows. Exhibits E2-dependent E3 ligase activity. Involved in pollen mitosis II (PMII) regulation during male gametogenesis. In Arabidopsis thaliana (Mouse-ear cress), this protein is E3 ubiquitin-protein ligase APD2.